A 77-amino-acid polypeptide reads, in one-letter code: DNA-directed RNA polymerase subunit omega (77 aa).

This sequence belongs to the RNA polymerase subunit omega family. As to quaternary structure, the RNAP catalytic core consists of 2 alpha, 1 beta, 1 beta' and 1 omega subunit. When a sigma factor is associated with the core the holoenzyme is formed, which can initiate transcription.

It catalyses the reaction RNA(n) + a ribonucleoside 5'-triphosphate = RNA(n+1) + diphosphate. In terms of biological role, promotes RNA polymerase assembly. Latches the N- and C-terminal regions of the beta' subunit thereby facilitating its interaction with the beta and alpha subunits. This Dichelobacter nodosus (strain VCS1703A) protein is DNA-directed RNA polymerase subunit omega.